The following is a 592-amino-acid chain: Delta-like protein 3 (592 aa).

The N-terminal stretch at 1 to 32 is a signal peptide; it reads MVSLQVSPLSQTLILAFLLPQALPAGVFELQI. Residues 33–490 lie on the Extracellular side of the membrane; the sequence is HSFGPGPGLG…LRQADPQRFL (458 aa). The 40-residue stretch at 174-213 folds into the DSL domain; it reads ARCEPPAVGAACARLCRSRSAPSRCGPGLRPCTPFPDECE. EGF-like domains lie at 214–247, 272–308, 310–349, 351–387, 389–425, and 427–463; these read APSVCRPGCSPEHGYCEEPDECRCLEGWTGPLCT, GPGPCDGNPCANGGSCSETSGSFECACPRGFYGLRCE, SGVTCADGPCFNGGLCVGGEDPDSAYVCHCPPGFQGSNCE, RVDRCSLQPCQNGGLCLDLGHALRCRCRAGFAGPRCE, DLDDCAGRACANGGTCVEGGGSRRCSCALGFGGRDCR, and RADPCASRPCAHGGRCYAHFSGLVCACAPGYMGVRCE. 18 cysteine pairs are disulfide-bonded: cysteine 218–cysteine 229, cysteine 222–cysteine 235, cysteine 237–cysteine 246, cysteine 276–cysteine 287, cysteine 281–cysteine 296, cysteine 298–cysteine 307, cysteine 314–cysteine 325, cysteine 319–cysteine 337, cysteine 339–cysteine 348, cysteine 355–cysteine 366, cysteine 360–cysteine 375, cysteine 377–cysteine 386, cysteine 393–cysteine 404, cysteine 398–cysteine 413, cysteine 415–cysteine 424, cysteine 431–cysteine 442, cysteine 436–cysteine 451, and cysteine 453–cysteine 462. A helical membrane pass occupies residues 491–511; sequence LPPALGLLVAAGLAGAALLVI. At 512-592 the chain is on the cytoplasmic side; that stretch reads HVRRRGPGQD…REDWLIQVLF (81 aa). The segment at 548-567 is disordered; it reads QDGAGDGPSSSADWNHPEDG.

In terms of assembly, can bind and activate Notch-1 or another Notch receptor. Ubiquitinated by MIB (MIB1 or MIB2), leading to its endocytosis and subsequent degradation. As to expression, predominantly expressed in the neuroectoderm and paraxial mesoderm during embryogenesis.

It localises to the membrane. Inhibits primary neurogenesis. May be required to divert neurons along a specific differentiation pathway. Plays a role in the formation of somite boundaries during segmentation of the paraxial mesoderm. This is Delta-like protein 3 (Dll3) from Mus musculus (Mouse).